The sequence spans 294 residues: Agamous-like MADS-box protein AGL82 (294 aa).

One can recognise an MADS-box domain in the interval 1–51 (MVPKVVDLQRIANDKTRITTYKKRKASLYKKAQEFSTLCGVETCLIVYGPT).

In terms of assembly, interacts with MEE14/CBP1.

Its subcellular location is the nucleus. Its function is as follows. Probable transcription factor that may function in the maintenance of the proper function of the central cell in pollen tube attraction. This is Agamous-like MADS-box protein AGL82 from Arabidopsis thaliana (Mouse-ear cress).